A 143-amino-acid chain; its full sequence is Small ribosomal subunit protein bS18m (143 aa).

Belongs to the bacterial ribosomal protein bS18 family. In terms of assembly, component of the mitochondrial ribosome small subunit (28S) which comprises a 12S rRNA and about 30 distinct proteins.

Its subcellular location is the mitochondrion. The protein is Small ribosomal subunit protein bS18m (MRPS18C) of Bos taurus (Bovine).